A 227-amino-acid chain; its full sequence is GTP:AMP phosphotransferase AK3, mitochondrial (227 aa).

Positions 17, 19, 20, 21, and 22 each coordinate GTP. The residue at position 20 (K20) is an N6-succinyllysine. An N6-acetyllysine; alternate modification is found at K29. N6-succinyllysine; alternate is present on K29. K34 is modified (N6-acetyllysine). At S37 the chain carries Phosphoserine. An NMP region spans residues 37–66 (SSGDLLRQNMLQGTEIAVLAKSFIDQGKLI). AMP is bound by residues S38 and R43. K57 is subject to N6-succinyllysine. N6-acetyllysine; alternate occurs at positions 64 and 80. K64 and K80 each carry N6-succinyllysine; alternate. K64 contributes to the AMP binding site. AMP is bound by residues G91, R94, and Q98. The LID stretch occupies residues 127 to 164 (ARWIHPASGRVYNIEFNPPKTVGIDDLTGEPLIQREDD). R128, Y138, N139, R161, and R172 together coordinate GTP. N6-acetyllysine; alternate occurs at positions 174 and 189. N6-succinyllysine; alternate occurs at positions 174 and 189. Residue T201 participates in GTP binding. K203 is subject to N6-acetyllysine.

Belongs to the adenylate kinase family. AK3 subfamily. As to quaternary structure, monomer.

The protein localises to the mitochondrion matrix. The enzyme catalyses a ribonucleoside 5'-triphosphate + AMP = a ribonucleoside 5'-diphosphate + ADP. It catalyses the reaction GTP + AMP = GDP + ADP. It carries out the reaction ITP + AMP = IDP + ADP. In terms of biological role, mitochondrial adenylate kinase with a specific GTP:AMP phosphotransferase activity. Could also use ITP as phosphate donor. Its physiological function is to recycle GTP into GDP which is necessary for the TCA cycle in the mitochondrial matrix. The chain is GTP:AMP phosphotransferase AK3, mitochondrial from Rattus norvegicus (Rat).